A 432-amino-acid polypeptide reads, in one-letter code: Adenosine 3'-phospho 5'-phosphosulfate transporter 1 (432 aa).

Helical transmembrane passes span 5-25, 40-60, 109-129, 154-174, 238-258, 265-285, 299-319, 353-373, and 387-407; these read WWAVVVLAAFPSLGAGGETPE, VVNAAGYASFMVPGYLLVQYF, ALKLLFCATGLQVSYLTWGVL, FLVLMNRVLALIVAGLSCVLC, WEYLTATLISIGVSMFLLSSG, PATTLSGLILLAGYIAFDSFT, SVQMMFGVNFFSCLFTVGSLL, LFIFYTIGQFGAAVFTIIMTL, and GHTVTVVGGLGVAVVFAALLL. The residue at position 427 (Ser-427) is a Phosphoserine.

It belongs to the nucleotide-sugar transporter family. SLC35B subfamily.

Its subcellular location is the golgi apparatus membrane. The catalysed reaction is 3'-phosphoadenylyl sulfate(in) + adenosine 3',5'-bisphosphate(out) = 3'-phosphoadenylyl sulfate(out) + adenosine 3',5'-bisphosphate(in). Functionally, probably functions as a 3'-phosphoadenylyl sulfate:adenosine 3',5'-bisphosphate antiporter at the Golgi membranes. Mediates the transport from the cytosol into the lumen of the Golgi of 3'-phosphoadenylyl sulfate/adenosine 3'-phospho 5'-phosphosulfate (PAPS), a universal sulfuryl donor for sulfation events that take place in that compartment. This Pongo abelii (Sumatran orangutan) protein is Adenosine 3'-phospho 5'-phosphosulfate transporter 1.